The sequence spans 220 residues: MGQQSLIYSFVARGTVILAEYTEFKGNFTSVAAQCLQKLPSSNNKFTYNCDGHTFNYLADNGFTYCVVVIESAGRQIPMAFLERVKEDFNKRYGGGKASTAKANSLNKEFGSKLKEHMQYCADHPEEISKLSKVKAQVTEVKGVMMENIEKVLDRGEKIELLVDKTENLRSQAQDFRTQGTKMKRKLWFENMKIKLIVFGIIVALILIIILSVCHGFKCT.

Over 1-196 (MGQQSLIYSF…LWFENMKIKL (196 aa)) the chain is Cytoplasmic. Positions 10-114 (FVARGTVILA…SLNKEFGSKL (105 aa)) constitute a Longin domain. Residues 130 to 190 (KLSKVKAQVT…TKMKRKLWFE (61 aa)) enclose the v-SNARE coiled-coil homology domain. The chain crosses the membrane as a helical; Anchor for type IV membrane protein span at residues 197 to 217 (IVFGIIVALILIIILSVCHGF). Residues 218 to 220 (KCT) lie on the Vesicular side of the membrane.

It belongs to the synaptobrevin family. Expressed in flowers, leaves, stems and roots.

It is found in the cell membrane. The protein resides in the early endosome membrane. In terms of biological role, involved in the targeting and/or fusion of transport vesicles to their target membrane. The sequence is that of Putative vesicle-associated membrane protein 726 (VAMP726) from Arabidopsis thaliana (Mouse-ear cress).